Here is a 556-residue protein sequence, read N- to C-terminus: Delta-1-pyrroline-5-carboxylate dehydrogenase 12A1, mitochondrial (556 aa).

Position 282–287 (282–287 (GSSRVA)) interacts with NAD(+). Glu-301 serves as the catalytic Proton acceptor. The Nucleophile role is filled by Cys-336.

The protein belongs to the aldehyde dehydrogenase family. As to expression, highly expressed in flowers. Constitutively expressed at low levels in the other tissues. Highly expressed in pollen grains and tissues undergoing cell death. Expressed in old leaves, mature siliques and developing embryos.

The protein localises to the mitochondrion matrix. It carries out the reaction (S)-1-pyrroline-5-carboxylate + NAD(+) + 2 H2O = L-glutamate + NADH + H(+). It functions in the pathway amino-acid degradation; L-proline degradation into L-glutamate; L-glutamate from L-proline: step 2/2. Its function is as follows. Plays a role in the inhibition of programmed cell death by converting the toxic proline catabolism intermediate (s)-1-pyrroline-5-carboxylate (P5C) to glutamate. This is Delta-1-pyrroline-5-carboxylate dehydrogenase 12A1, mitochondrial from Arabidopsis thaliana (Mouse-ear cress).